A 379-amino-acid chain; its full sequence is Odorant receptor 33b (379 aa).

The Cytoplasmic portion of the chain corresponds to 1 to 37; sequence MDLKPRVIRSEDIYRTYWLYWHLLGLESNFFLNRLLD. Residues 38–58 traverse the membrane as a helical segment; it reads LVITIFVTIWYPIHLILGLFM. The Extracellular portion of the chain corresponds to 59-64; sequence ERSLGD. A helical membrane pass occupies residues 65–85; that stretch reads VCKGLPITAACFFASFKFICF. Residues 86-129 are Cytoplasmic-facing; the sequence is RFKLSEIKEIEILFKELDQRALSREECEFFNQNTRREANFIWKS. Residues 130-150 form a helical membrane-spanning segment; that stretch reads FIVAYGLSNISAIASVLFGGG. Residues 151–165 lie on the Extracellular side of the membrane; sequence HKLLYPAWFPYDVQA. The helical transmembrane segment at 166–186 threads the bilayer; sequence TELIFWLSVTYQIAGVSLAIL. Residues 187 to 256 are Cytoplasmic-facing; the sequence is QNLANDSYPP…LLRSTMNISQ (70 aa). The helical transmembrane segment at 257 to 277 threads the bilayer; that stretch reads LGQFISSGVNISITLVNILFF. Residues 278-281 are Extracellular-facing; the sequence is ADNN. A helical transmembrane segment spans residues 282-302; that stretch reads FAITYYGVYFLSMVLELFPCC. Residues 303 to 355 lie on the Cytoplasmic side of the membrane; it reads YYGTLISVEMNQLTYAIYSSNWMSMNRSYSRILLIFMQLTLAEVQIKAGGMIG. Residues 356 to 376 traverse the membrane as a helical segment; the sequence is IGMNAFFATVRLAYSFFTLAM. The Extracellular portion of the chain corresponds to 377 to 379; that stretch reads SLR.

This sequence belongs to the insect chemoreceptor superfamily. Heteromeric odorant receptor channel (TC 1.A.69) family. Or2a subfamily. Interacts with Orco. Complexes exist early in the endomembrane system in olfactory sensory neurons (OSNs), coupling these complexes to the conserved ciliary trafficking pathway. As to expression, expressed in 15 cells in the antenna but not the maxillary palp.

It localises to the cell membrane. Odorant receptor which mediates acceptance or avoidance behavior, depending on its substrates. The odorant receptor repertoire encodes a large collection of odor stimuli that vary widely in identity, intensity, and duration. May form a complex with Orco to form odorant-sensing units, providing sensitive and prolonged odorant signaling and calcium permeability. Involved in the behavioral responses to pentyl acetate and pyrazines. This chain is Odorant receptor 33b (Or33b), found in Drosophila melanogaster (Fruit fly).